We begin with the raw amino-acid sequence, 539 residues long: Phosphatidylinositol 4-phosphate 5-kinase type-1 beta (539 aa).

The segment at 1 to 21 is disordered; the sequence is MSSTAENGDAVPGKQNEEKTY. Residues 25-395 form the PIPK domain; it reads ASSAIKGAIQ…RFLKFMNSRV (371 aa). Phosphoserine is present on residues S445, S447, and S448.

In terms of assembly, interacts with RAC1, AJUBA, PLD1, PLD2 and ARF1.

Its subcellular location is the cytoplasm. It is found in the cytosol. The protein localises to the cell membrane. The protein resides in the endomembrane system. The catalysed reaction is a 1,2-diacyl-sn-glycero-3-phospho-(1D-myo-inositol 4-phosphate) + ATP = a 1,2-diacyl-sn-glycero-3-phospho-(1D-myo-inositol-4,5-bisphosphate) + ADP + H(+). It carries out the reaction 1-octadecanoyl-2-(5Z,8Z,11Z,14Z)-eicosatetraenoyl-sn-glycero-3-phospho-1D-myo-inositol 4-phosphate + ATP = 1-octadecanoyl-2-(5Z,8Z,11Z,14Z)-eicosatetraenoyl-sn-glycero-3-phospho-1D-myo-inositol 4,5-bisphosphate + ADP + H(+). It catalyses the reaction 1-octadecanoyl-2-(9Z)-octadecenoyl-sn-glycero-3-phospho-1D-myo-inositol 4-phosphate + ATP = 1-octadecanoyl-2-(9Z)-octadecenoyl-sn-glycero-3-phospho-1D-myo-inositol 4,5-bisphosphate + ADP + H(+). The enzyme catalyses 1-octadecanoyl-2-(9Z)-octadecenoyl-sn-glycero-3-phospho-1D-myo-inositol + ATP = 1-octadecanoyl-2-(9Z)-octadecenoyl-sn-glycero-3-phospho-1D-myo-inositol 5-phosphate + ADP + H(+). The catalysed reaction is 1-octadecanoyl-2-(9Z,12Z)-octadecadienoyl-sn-glycero-3-phospho-1D-myo-inositol + ATP = 1-octadecanoyl-2-(9Z,12Z)-octadecadienoyl-sn-glycero-3-phospho-1D-myo-inositol 5-phosphate + ADP + H(+). It carries out the reaction 1-octadecanoyl-2-(5Z,8Z,11Z,14Z-eicosatetraenoyl)-sn-glycero-3-phospho-(1D-myo-inositol) + ATP = 1-octadecanoyl-2-(5Z,8Z,11Z,14Z)-eicosatetraenoyl-sn-glycero-3-phospho-1D-myo-inositol 5-phosphate + ADP + H(+). It catalyses the reaction 1,2-di-(9Z,12Z)-octadecadienoyl-sn-glycero-3-phospho-1D-myo-inositol + ATP = 1,2-di(9Z,12Z)-octadecadienoyl-sn-glycero-3-phospho-1D-myo-inositol 5-phosphate + ADP + H(+). In terms of biological role, catalyzes the phosphorylation of phosphatidylinositol 4-phosphate (PtdIns(4)P/PI4P) to form phosphatidylinositol 4,5-bisphosphate (PtdIns(4,5)P2/PIP2), a lipid second messenger that regulates several cellular processes such as signal transduction, vesicle trafficking, actin cytoskeleton dynamics, cell adhesion, and cell motility. PtdIns(4,5)P2 can directly act as a second messenger or can be utilized as a precursor to generate other second messengers: inositol 1,4,5-trisphosphate (IP3), diacylglycerol (DAG) or phosphatidylinositol-3,4,5-trisphosphate (PtdIns(3,4,5)P3/PIP3). Mediates RAC1-dependent reorganization of actin filaments. Contributes to the activation of phospholipase PLD2. Together with PIP5K1A, is required, after stimulation by G-protein coupled receptors, for the synthesis of IP3 that will induce stable platelet adhesion. The chain is Phosphatidylinositol 4-phosphate 5-kinase type-1 beta from Rattus norvegicus (Rat).